Reading from the N-terminus, the 89-residue chain is Small ribosomal subunit protein uS15 (89 aa).

The span at 1–21 shows a compositional bias: basic and acidic residues; it reads MALSPEKKNEIIENFKTHEGD. A disordered region spans residues 1–23; it reads MALSPEKKNEIIENFKTHEGDTG.

The protein belongs to the universal ribosomal protein uS15 family. Part of the 30S ribosomal subunit. Forms a bridge to the 50S subunit in the 70S ribosome, contacting the 23S rRNA.

One of the primary rRNA binding proteins, it binds directly to 16S rRNA where it helps nucleate assembly of the platform of the 30S subunit by binding and bridging several RNA helices of the 16S rRNA. Functionally, forms an intersubunit bridge (bridge B4) with the 23S rRNA of the 50S subunit in the ribosome. This chain is Small ribosomal subunit protein uS15, found in Desulforamulus reducens (strain ATCC BAA-1160 / DSM 100696 / MI-1) (Desulfotomaculum reducens).